The chain runs to 205 residues: Urease accessory protein UreG 1 (205 aa).

14 to 21 (GPVGSGKT) is a GTP binding site.

The protein belongs to the SIMIBI class G3E GTPase family. UreG subfamily. In terms of assembly, homodimer. UreD, UreF and UreG form a complex that acts as a GTP-hydrolysis-dependent molecular chaperone, activating the urease apoprotein by helping to assemble the nickel containing metallocenter of UreC. The UreE protein probably delivers the nickel.

It localises to the cytoplasm. Functionally, facilitates the functional incorporation of the urease nickel metallocenter. This process requires GTP hydrolysis, probably effectuated by UreG. This chain is Urease accessory protein UreG 1, found in Methylobacterium radiotolerans (strain ATCC 27329 / DSM 1819 / JCM 2831 / NBRC 15690 / NCIMB 10815 / 0-1).